A 352-amino-acid chain; its full sequence is C-C chemokine receptor type 5 (352 aa).

The Extracellular portion of the chain corresponds to 1–30 (MDYQVSSPTYDIDYYTSEPCQKINVKQIAA). Sulfotyrosine is present on Y3. O-linked (GalNAc...) serine glycosylation is found at S6 and S7. Y10, Y14, and Y15 each carry sulfotyrosine. 2 disulfides stabilise this stretch: C20–C269 and C101–C178. A helical transmembrane segment spans residues 31-58 (RLLPPLYSLVFIFGFVGNMLVILILINC). Residues 59–68 (KRLKSMTDIY) are Cytoplasmic-facing. The helical transmembrane segment at 69 to 89 (LLNLAISDLFFLLTVPFWAHY) threads the bilayer. The Extracellular portion of the chain corresponds to 90-102 (AAAQWDFGNTMCQ). A helical membrane pass occupies residues 103–124 (LLTGLYFIGFFSGIFFIILLTI). At 125-141 (DRYLAIVHAVFALKART) the chain is on the cytoplasmic side. The chain crosses the membrane as a helical span at residues 142-166 (VTFGVVTSVITWVVAVFASLPGIIF). Residues 167 to 198 (TRSQKEGLHYTCSSHFPYSQYQFWKNFQTLKI) lie on the Extracellular side of the membrane. Residues 199-218 (VILGLVLPLLVMVICYSGIL) traverse the membrane as a helical segment. Over 219-235 (KTLLRCRNEKKRHRAVR) the chain is Cytoplasmic. The chain crosses the membrane as a helical span at residues 236–260 (LIFTIMIVYFLFWAPYNIVLLLNTF). The Extracellular portion of the chain corresponds to 261-277 (QEFFGLNNCSSSNRLDQ). The helical transmembrane segment at 278–301 (AMQVTETLGMTHCCINPIIYAFVG) threads the bilayer. Residues 302–352 (EKFRNYLLVFFQKHIAKRFCKCCSIFQQEAPERASSVYTRSTGEQEISVGL) are Cytoplasmic-facing. S-palmitoyl cysteine attachment occurs at residues C321, C323, and C324. S336, S337, S342, and S349 each carry phosphoserine; by BARK1.

The protein belongs to the G-protein coupled receptor 1 family. As to quaternary structure, interacts with PRAF2. Efficient ligand binding to CCL3/MIP-1alpha and CCL4/MIP-1beta requires sulfation, O-glycosylation and sialic acid modifications. Glycosylation on Ser-6 is required for efficient binding of CCL4. Interacts with GRK2. Interacts with ARRB1 and ARRB2. Interacts with CNIH4. Interacts with S100A4; this interaction stimulates T-lymphocyte chemotaxis. Sulfated on at least 2 of the N-terminal tyrosines. Sulfation is required for efficient binding of the chemokines, CCL3 and CCL4. In terms of processing, palmitoylation in the C-terminal is important for cell surface expression. Post-translationally, phosphorylation on serine residues in the C-terminal is stimulated by binding CC chemokines especially by APO-RANTES. O-glycosylated, but not N-glycosylated. Ser-6 appears to be the major site even if Ser-7 may be also O-glycosylated. Also sialylated glycans present which contribute to chemokine binding. Thr-16 and Ser-17 may also be glycosylated and, if so, with small moieties such as a T-antigen.

The protein localises to the cell membrane. In terms of biological role, receptor for a number of inflammatory CC-chemokines including CCL3/MIP-1-alpha, CCL4/MIP-1-beta and RANTES and subsequently transduces a signal by increasing the intracellular calcium ion level. May play a role in the control of granulocytic lineage proliferation or differentiation. Participates in T-lymphocyte migration to the infection site by acting as a chemotactic receptor. This is C-C chemokine receptor type 5 (CCR5) from Pongo abelii (Sumatran orangutan).